The following is a 561-amino-acid chain: Probable oligo-1,6-glucosidase 2 (561 aa).

The active-site Nucleophile is the Asp199. Glu255 functions as the Proton donor in the catalytic mechanism.

The protein belongs to the glycosyl hydrolase 13 family.

It is found in the cytoplasm. The enzyme catalyses Hydrolysis of (1-&gt;6)-alpha-D-glucosidic linkages in some oligosaccharides produced from starch and glycogen by alpha-amylase, and in isomaltose.. In Bacillus subtilis (strain 168), this protein is Probable oligo-1,6-glucosidase 2 (ycdG).